The following is a 96-amino-acid chain: MAFNTITFLQWAVFVAILFNMNLHSASAGSKGSSAQQSSHDSIKAEFCETNCTMKTGGKWTQCHGGCFCVHVGNETVGRCIKLDGDYDYPSSKHEE.

The first 28 residues, 1–28 (MAFNTITFLQWAVFVAILFNMNLHSASA), serve as a signal peptide directing secretion. Cystine bridges form between C48/C67, C52/C69, and C63/C80. Residue N51 is glycosylated (N-linked (GlcNAc...) asparagine). An N-linked (GlcNAc...) asparagine glycan is attached at N74.

It is found in the secreted. In terms of biological role, salivary chemokine-binding protein which binds to host chemokines CXCL1, CXCL2, CXCL3, CXCL5, CXCL6, CXCL11 and CXCL13. In Ixodes ricinus (Common tick), this protein is Evasin P1078.